The sequence spans 431 residues: MSEAKGVGGIDPRATPGSAGAGERPPMGTLSPRAGEGELYAPMPSKHMVINLGPSHPAMHGVTRAVVELNGEIIEGMKLDIGFLHRGFEKSCENVTWGQVFPYTDRLNYVSSIMNNVGFALAVEKLAKLEIPERARYLRVITSEIHRICDHLTLVGAMAMELGAMTVFLYGIEARDLLWDRLAELCGARLTSNYARIGGVARDIPEGWQEKTLKVLDRVVAIREEIGQLLNRNRIFIDRCLNTGKVSREDALELGFTGPCLRASGEPYDVRKAAPYLVYDRLDFDIPVGSNGDNFDRYLMRMEEMRQSDKIIRQCFEQMAPGEIIVQDFRYALPPKPLVYGTIEGVMAHFKLVMEGIKVPAGEVYSYTEAANGELGFYVVSDGGGRPYKLGLRAPGWPMLAALPVMTKGSLLSDLIPTFDSINMIGGEVEQ.

A disordered region spans residues 1–37 (MSEAKGVGGIDPRATPGSAGAGERPPMGTLSPRAGEG).

The protein belongs to the complex I 49 kDa subunit family. As to quaternary structure, NDH-1 is composed of 14 different subunits. Subunits NuoB, C, D, E, F, and G constitute the peripheral sector of the complex.

It is found in the cell inner membrane. It carries out the reaction a quinone + NADH + 5 H(+)(in) = a quinol + NAD(+) + 4 H(+)(out). NDH-1 shuttles electrons from NADH, via FMN and iron-sulfur (Fe-S) centers, to quinones in the respiratory chain. The immediate electron acceptor for the enzyme in this species is believed to be ubiquinone. Couples the redox reaction to proton translocation (for every two electrons transferred, four hydrogen ions are translocated across the cytoplasmic membrane), and thus conserves the redox energy in a proton gradient. In Anaeromyxobacter sp. (strain K), this protein is NADH-quinone oxidoreductase subunit D 2.